The sequence spans 298 residues: 4-hydroxy-tetrahydrodipicolinate synthase (298 aa).

Position 48 (Thr48) interacts with pyruvate. Tyr137 functions as the Proton donor/acceptor in the catalytic mechanism. The active-site Schiff-base intermediate with substrate is Lys166. Ile207 is a binding site for pyruvate.

The protein belongs to the DapA family. As to quaternary structure, homotetramer; dimer of dimers.

It localises to the cytoplasm. The catalysed reaction is L-aspartate 4-semialdehyde + pyruvate = (2S,4S)-4-hydroxy-2,3,4,5-tetrahydrodipicolinate + H2O + H(+). Its pathway is amino-acid biosynthesis; L-lysine biosynthesis via DAP pathway; (S)-tetrahydrodipicolinate from L-aspartate: step 3/4. Catalyzes the condensation of (S)-aspartate-beta-semialdehyde [(S)-ASA] and pyruvate to 4-hydroxy-tetrahydrodipicolinate (HTPA). This Campylobacter jejuni subsp. jejuni serotype O:2 (strain ATCC 700819 / NCTC 11168) protein is 4-hydroxy-tetrahydrodipicolinate synthase.